The primary structure comprises 1372 residues: DNA-directed RNA polymerase subunit beta (1372 aa).

It belongs to the RNA polymerase beta chain family. In terms of assembly, the RNAP catalytic core consists of 2 alpha, 1 beta, 1 beta' and 1 omega subunit. When a sigma factor is associated with the core the holoenzyme is formed, which can initiate transcription.

The enzyme catalyses RNA(n) + a ribonucleoside 5'-triphosphate = RNA(n+1) + diphosphate. Its function is as follows. DNA-dependent RNA polymerase catalyzes the transcription of DNA into RNA using the four ribonucleoside triphosphates as substrates. This Psychrobacter arcticus (strain DSM 17307 / VKM B-2377 / 273-4) protein is DNA-directed RNA polymerase subunit beta.